We begin with the raw amino-acid sequence, 681 residues long: Peroxisomal acyl-coenzyme A oxidase 2 (681 aa).

The interval Met-1–Ser-28 is disordered. Ser-9 is subject to Phosphoserine. At Thr-13 the chain carries Phosphothreonine. The segment covering Trp-14–Ser-28 has biased composition (basic and acidic residues). An N6-succinyllysine mark is found at Lys-66, Lys-137, Lys-303, Lys-453, Lys-561, and Lys-667. Positions Pro-679 to Leu-681 match the Microbody targeting signal motif.

Belongs to the acyl-CoA oxidase family. As to quaternary structure, homodimer. The cofactor is FAD. In terms of processing, acetylation of Lys-667 is observed in liver mitochondria from fasted mice but not from fed mice.

Its subcellular location is the peroxisome. The enzyme catalyses (25R)-3alpha,7alpha,12alpha-trihydroxy-5beta-cholestan-26-oyl-CoA + A + H2O = (24R,25R)-3alpha,7alpha,12alpha,24-tetrahydroxy-5beta-cholestan-26-oyl-CoA + AH2. It catalyses the reaction (25S)-3alpha,7alpha,12alpha-trihydroxy-5beta-cholestan-26-oyl-CoA + O2 = (24E)-3alpha,7alpha,12alpha-trihydroxy-5beta-cholest-24-en-26-oyl-CoA + H2O2. In terms of biological role, oxidizes the CoA esters of the bile acid intermediates di- and tri-hydroxycoprostanic acids. Capable of oxidizing short as well as long chain 2-methyl branched fatty acids. This is Peroxisomal acyl-coenzyme A oxidase 2 from Mus musculus (Mouse).